The primary structure comprises 214 residues: Large ribosomal subunit protein eL14 (214 aa).

Lysine 79 is subject to N6-acetyllysine. At lysine 85 the chain carries N6-acetyllysine; alternate. N6-succinyllysine; alternate is present on lysine 85. Lysine 124 participates in a covalent cross-link: Glycyl lysine isopeptide (Lys-Gly) (interchain with G-Cter in SUMO2). Serine 139 is subject to Phosphoserine. A disordered region spans residues 161-214 (PAKKITTEGKKAPAQKAPAQKAAGQKAAPPPKTQKGQKAPSQKAPAPKASGKKA). A 1-1; approximate repeat occupies 170–174 (KKAPA). Positions 170 to 189 (KKAPAQKAPAQKAAGQKAAP) are 4 X 5 AA tandem repeats of Q-K-A-[APS]-X. A compositionally biased stretch (low complexity) spans 172 to 214 (APAQKAPAQKAAGQKAAPPPKTQKGQKAPSQKAPAPKASGKKA). 5 consecutive repeat copies span residues 175–179 (QKAPA), 180–184 (QKAAG), 185–189 (QKAAP), 192–194 (KTQ), and 195–197 (KGQ). A 2 X 3 AA tandem repeats of K-G-Q region spans residues 192 to 197 (KTQKGQ). Lysine 203 carries the post-translational modification N6-succinyllysine.

Belongs to the eukaryotic ribosomal protein eL14 family. Component of the large ribosomal subunit.

The protein localises to the cytoplasm. Component of the large ribosomal subunit. The ribosome is a large ribonucleoprotein complex responsible for the synthesis of proteins in the cell. The chain is Large ribosomal subunit protein eL14 (RPL14) from Bos taurus (Bovine).